A 430-amino-acid polypeptide reads, in one-letter code: Transcriptional regulatory protein RXT2 (430 aa).

The segment at 408–430 (EIENTMEDGVVDDNEPDEEANRA) is disordered.

The protein belongs to the RXT2 family. In terms of assembly, component of the RPD3C(L) complex composed of at least ASH1, CTI6, DEP1, PHO23, RPD3, RXT2, RXT3, SAP30, SDS3, SIN3, UME1 and UME6.

It localises to the nucleus. Component of the RPD3C(L) histone deacetylase complex (HDAC) responsible for the deacetylation of lysine residues on the N-terminal part of the core histones (H2A, H2B, H3 and H4). Histone deacetylation gives a tag for epigenetic repression and plays an important role in transcriptional regulation, cell cycle progression and developmental events. The sequence is that of Transcriptional regulatory protein RXT2 (RXT2) from Saccharomyces cerevisiae (strain ATCC 204508 / S288c) (Baker's yeast).